A 184-amino-acid polypeptide reads, in one-letter code: Photosystem I assembly protein Ycf4 (184 aa).

2 consecutive transmembrane segments (helical) span residues 22-42 (FCWA…GISS) and 57-77 (IIFF…LFIS).

The protein belongs to the Ycf4 family.

It localises to the plastid. Its subcellular location is the chloroplast thylakoid membrane. Seems to be required for the assembly of the photosystem I complex. The polypeptide is Photosystem I assembly protein Ycf4 (Populus alba (White poplar)).